The sequence spans 214 residues: Adenylate kinase (214 aa).

10 to 15 (GAGKGT) is a binding site for ATP. The NMP stretch occupies residues 30 to 59 (STGDMLRAAVKAGTPLGLEAKKVMDAGQLV). Residues T31, R36, 57–59 (QLV), 85–88 (GFPR), and Q92 contribute to the AMP site. Positions 122 to 159 (GRRVHPGSGRVYHVVFNPPKVEGKDDVTGEDLAIRPDD) are LID. Residues R123 and 132–133 (VY) contribute to the ATP site. R156 and R167 together coordinate AMP. Q200 is an ATP binding site.

It belongs to the adenylate kinase family. Monomer.

The protein localises to the cytoplasm. The catalysed reaction is AMP + ATP = 2 ADP. Its pathway is purine metabolism; AMP biosynthesis via salvage pathway; AMP from ADP: step 1/1. Functionally, catalyzes the reversible transfer of the terminal phosphate group between ATP and AMP. Plays an important role in cellular energy homeostasis and in adenine nucleotide metabolism. The chain is Adenylate kinase from Shewanella putrefaciens (strain CN-32 / ATCC BAA-453).